The chain runs to 159 residues: Putative 4-hydroxy-4-methyl-2-oxoglutarate aldolase (159 aa).

Substrate contacts are provided by residues 78–81 (GDVI) and Arg-100. Asp-101 provides a ligand contact to a divalent metal cation.

Belongs to the class II aldolase/RraA-like family. Homotrimer. It depends on a divalent metal cation as a cofactor.

It carries out the reaction 4-hydroxy-4-methyl-2-oxoglutarate = 2 pyruvate. The enzyme catalyses oxaloacetate + H(+) = pyruvate + CO2. Its function is as follows. Catalyzes the aldol cleavage of 4-hydroxy-4-methyl-2-oxoglutarate (HMG) into 2 molecules of pyruvate. Also contains a secondary oxaloacetate (OAA) decarboxylase activity due to the common pyruvate enolate transition state formed following C-C bond cleavage in the retro-aldol and decarboxylation reactions. This is Putative 4-hydroxy-4-methyl-2-oxoglutarate aldolase from Mycobacterium sp. (strain JLS).